A 188-amino-acid polypeptide reads, in one-letter code: Ribosome-recycling factor (188 aa).

It belongs to the RRF family.

It localises to the cytoplasm. Responsible for the release of ribosomes from messenger RNA at the termination of protein biosynthesis. May increase the efficiency of translation by recycling ribosomes from one round of translation to another. The sequence is that of Ribosome-recycling factor from Anaeromyxobacter sp. (strain K).